The sequence spans 535 residues: SIR4-interacting protein SIF2 (535 aa).

Positions 4 to 36 (TSEELNYLIWRYCQEMGHEVSALALQDETRVLE) constitute a LisH domain. The segment at 104–140 (EGRFTLETNSESNKAGEDGASTVERETQEDDTNSIDS) is disordered. Over residues 130 to 140 (TQEDDTNSIDS) the composition is skewed to acidic residues. Phosphoserine is present on serine 137. WD repeat units lie at residues 155-186 (VKLDNIVSSTWNPLDESILAYGEKNSVARLAR), 218-248 (KTTNQVTCLAWSHDGNSIVTGVENGELRLWN), 259-289 (FHRAPIVSVKWNKDGTHIISMDVENVTILWN), 316-345 (GDGSLGVDVEWVDDDKFVIPGPKGAIFVYQ), 357-387 (GHHGPISVLEFNDTNKLLLSASDDGTLRIWH), 399-428 (GHSQSIVSASWVGDDKVISCSMDGSVRLWS), 440-470 (VDGVPIFAGRISQDGQKYAVAFMDGQVNVYD), and 503-534 (SQDNDYIFDLSWNCAGNKISVAYSLQEGSVVA).

As to quaternary structure, homotetramer. Interacts with SIR4 N-terminal domain. Interacts with a complex composed of SIN3 and RPD3. Identified in the Set3C complex with HOS2, HST1, SNT1, CPR1, HOS4/YIL112W and SET3.

It is found in the nucleus. In terms of biological role, antagonizes telomeric silencing in yeast. May recruit SIR4 to non-telomeric sites or repression. This chain is SIR4-interacting protein SIF2 (SIF2), found in Saccharomyces cerevisiae (strain ATCC 204508 / S288c) (Baker's yeast).